Consider the following 682-residue polypeptide: 1,4-alpha-glucan-branching enzyme (682 aa).

The (1,4-alpha-D-glucosyl)n site is built by tryptophan 88 and lysine 124. Aspartate 342 functions as the Nucleophile in the catalytic mechanism. The active-site Proton donor is glutamate 397.

Belongs to the glycosyl hydrolase 13 family. GlgB subfamily.

The protein resides in the cytoplasm. The enzyme catalyses Transfers a segment of a (1-&gt;4)-alpha-D-glucan chain to a primary hydroxy group in a similar glucan chain.. It participates in glycan biosynthesis; glycogen biosynthesis. Functionally, glycogen-branching enzyme participates in the glycogen biosynthetic process along with glycogenin and glycogen synthase. Generates alpha-1,6-glucosidic branches from alpha-1,4-linked glucose chains, to increase solubility of the glycogen polymer. The polypeptide is 1,4-alpha-glucan-branching enzyme (GLC3) (Cryptococcus neoformans var. neoformans serotype D (strain B-3501A) (Filobasidiella neoformans)).